The sequence spans 213 residues: Large ribosomal subunit protein uL1 (213 aa).

It belongs to the universal ribosomal protein uL1 family. Part of the 50S ribosomal subunit.

Functionally, binds directly to 23S rRNA. Probably involved in E site tRNA release. Protein L1 is also a translational repressor protein, it controls the translation of its operon by binding to its mRNA. The protein is Large ribosomal subunit protein uL1 of Methanococcus voltae.